A 405-amino-acid chain; its full sequence is Phosphopentomutase (405 aa).

Mn(2+) contacts are provided by D10, D297, H302, D338, H339, and H350.

Belongs to the phosphopentomutase family. Mn(2+) serves as cofactor.

The protein resides in the cytoplasm. The enzyme catalyses 2-deoxy-alpha-D-ribose 1-phosphate = 2-deoxy-D-ribose 5-phosphate. It catalyses the reaction alpha-D-ribose 1-phosphate = D-ribose 5-phosphate. It functions in the pathway carbohydrate degradation; 2-deoxy-D-ribose 1-phosphate degradation; D-glyceraldehyde 3-phosphate and acetaldehyde from 2-deoxy-alpha-D-ribose 1-phosphate: step 1/2. Functionally, isomerase that catalyzes the conversion of deoxy-ribose 1-phosphate (dRib-1-P) and ribose 1-phosphate (Rib-1-P) to deoxy-ribose 5-phosphate (dRib-5-P) and ribose 5-phosphate (Rib-5-P), respectively. In Pseudoalteromonas translucida (strain TAC 125), this protein is Phosphopentomutase.